A 657-amino-acid chain; its full sequence is Threonine--tRNA ligase (657 aa).

Residues 7–70 (ILAVIALTLP…TADAAIEIIT (64 aa)) form the TGS domain. The tract at residues 253-555 (DHRKLGAELE…LIEHTAGNFP (303 aa)) is catalytic. Zn(2+)-binding residues include cysteine 351, histidine 402, and histidine 532.

The protein belongs to the class-II aminoacyl-tRNA synthetase family. Homodimer. Zn(2+) is required as a cofactor.

It is found in the cytoplasm. The enzyme catalyses tRNA(Thr) + L-threonine + ATP = L-threonyl-tRNA(Thr) + AMP + diphosphate + H(+). Catalyzes the attachment of threonine to tRNA(Thr) in a two-step reaction: L-threonine is first activated by ATP to form Thr-AMP and then transferred to the acceptor end of tRNA(Thr). Also edits incorrectly charged L-seryl-tRNA(Thr). The protein is Threonine--tRNA ligase of Pelodictyon phaeoclathratiforme (strain DSM 5477 / BU-1).